An 85-amino-acid polypeptide reads, in one-letter code: UPF0386 protein Bind_1628 (85 aa).

It belongs to the UPF0386 family.

The polypeptide is UPF0386 protein Bind_1628 (Beijerinckia indica subsp. indica (strain ATCC 9039 / DSM 1715 / NCIMB 8712)).